Reading from the N-terminus, the 227-residue chain is dTTP/UTP pyrophosphatase (227 aa).

The disordered stretch occupies residues 1 to 21 (MNDLPRAELPGSGSPNPESLI). D87 acts as the Proton acceptor in catalysis.

Belongs to the Maf family. YhdE subfamily. The cofactor is a divalent metal cation.

The protein resides in the cytoplasm. The catalysed reaction is dTTP + H2O = dTMP + diphosphate + H(+). It catalyses the reaction UTP + H2O = UMP + diphosphate + H(+). Functionally, nucleoside triphosphate pyrophosphatase that hydrolyzes dTTP and UTP. May have a dual role in cell division arrest and in preventing the incorporation of modified nucleotides into cellular nucleic acids. In Rhodopirellula baltica (strain DSM 10527 / NCIMB 13988 / SH1), this protein is dTTP/UTP pyrophosphatase.